A 192-amino-acid chain; its full sequence is Adenylate kinase (192 aa).

10–15 (GAGKGT) contacts ATP. The NMP stretch occupies residues 30–59 (STGDMLRTAVAQATEVGKRAKAVMDAGQLV). Residues T31, R36, 57 to 59 (QLV), 85 to 88 (GYPR), and Q92 each bind AMP. An LID region spans residues 126–142 (NRVTETVAAGGTVRSDD). Position 127 (R127) interacts with ATP. Residues R139 and R150 each coordinate AMP. Residue A178 coordinates ATP.

It belongs to the adenylate kinase family. As to quaternary structure, monomer.

The protein localises to the cytoplasm. It carries out the reaction AMP + ATP = 2 ADP. It participates in purine metabolism; AMP biosynthesis via salvage pathway; AMP from ADP: step 1/1. In terms of biological role, catalyzes the reversible transfer of the terminal phosphate group between ATP and AMP. Plays an important role in cellular energy homeostasis and in adenine nucleotide metabolism. The chain is Adenylate kinase from Rhizobium meliloti (strain 1021) (Ensifer meliloti).